Consider the following 131-residue polypeptide: MAKINKGYVANFIEENGFPEQGHFEEKKDLQAFYKHLSTEQLEEWVELEGLEVKDTDSDSIYRMRLCMAILYLNFPKKTAGKKKASPYKHISLEELVQMATDNDIEVKHTDSDKILRMRTIMALKEAGKLG.

This is Putative gene 51 protein (51) from Bacillus phage SP01 (Bacteriophage SP01).